The following is a 309-amino-acid chain: Sulfate adenylyltransferase subunit 2 (309 aa).

It belongs to the PAPS reductase family. CysD subfamily. As to quaternary structure, heterodimer composed of CysD, the smaller subunit, and CysN.

It carries out the reaction sulfate + ATP + H(+) = adenosine 5'-phosphosulfate + diphosphate. It participates in sulfur metabolism; hydrogen sulfide biosynthesis; sulfite from sulfate: step 1/3. Its function is as follows. With CysN forms the ATP sulfurylase (ATPS) that catalyzes the adenylation of sulfate producing adenosine 5'-phosphosulfate (APS) and diphosphate, the first enzymatic step in sulfur assimilation pathway. APS synthesis involves the formation of a high-energy phosphoric-sulfuric acid anhydride bond driven by GTP hydrolysis by CysN coupled to ATP hydrolysis by CysD. The protein is Sulfate adenylyltransferase subunit 2 of Aeromonas salmonicida (strain A449).